A 617-amino-acid polypeptide reads, in one-letter code: Alkaline/neutral invertase E, chloroplastic (617 aa).

The N-terminal 45 residues, 1–45, are a transit peptide targeting the chloroplast; it reads MAASETVLRVPLGSVSQSCYLASFFVNSTPNLSFKPVSRNRKTVR. Position 87 is a phosphoserine (S87).

The protein belongs to the glycosyl hydrolase 100 family. As to expression, expressed in roots, leaves and flowers.

The protein resides in the plastid. Its subcellular location is the chloroplast. The enzyme catalyses Hydrolysis of terminal non-reducing beta-D-fructofuranoside residues in beta-D-fructofuranosides.. Chloroplastic invertase that cleaves sucrose into glucose and fructose and is associated with the development of the photosynthetic apparatus and the assimilation of nitrogen in seedlings to control the sucrose to hexose ratio. Participates in the carbon flux between the cytosol and plastids in leaves. The chain is Alkaline/neutral invertase E, chloroplastic from Arabidopsis thaliana (Mouse-ear cress).